Here is a 138-residue protein sequence, read N- to C-terminus: MESFVAMKVVCITVLFVIVAVNESATSEANTSNAAKDTKKTNVTLQFPNYIPNPKQLALKLLEICKNNKSSLNSLTARSSTNYYAINDKYVDFKYYTFLCKHDKDRNVTLNMPPDTPCGPNGQKCANKSQCVGHIPGC.

Positions 1–21 are cleaved as a signal peptide; sequence MESFVAMKVVCITVLFVIVAV. N-linked (GlcNAc...) asparagine glycans are attached at residues N30, N42, N68, N107, and N127. The CD4-binding stretch occupies residues 119 to 138; the sequence is GPNGQKCANKSQCVGHIPGC.

Belongs to the salp15 family. In terms of assembly, interacts with host CD4. Interacts with host DC-SIGN (CD209). Interacts with Borrelia outer surface protein C (OspC). In terms of tissue distribution, expressed in salivary glands.

Its subcellular location is the secreted. Its function is as follows. Salivary tick protein that downregulates host immune system by binding to both dendritic cells, and CD4(+) T cells. Specifically binds to the CD4 coreceptor on T cells. This interaction prevents the activation of the Src kinase, Lck, and its downstream substrate Zap-70, and results in deficient activation of PLCgamma1, the repression of calcium fluxes triggered by T-cell antigen receptor (TCR) ligation, and a subsequent reduction in interleukin-2 production. This salivary protein also binds to DC-SIGN (CD209) on dendritic cells (DC) and activates the Raf-1 kinase/MEK signaling pathway that results in down-regulating expression of pro-inflammatory cytokines. Furthermore, it inhibits T cell proliferation induced by DCs. It also inhibits in vitro keratinocyte inflammation induced by Borrelia burgdorferi or by the major outer surface protein (OspC) of Borrelia. In addition, it downregulates chemokines and monocyte chemoattractant protein 1, as well as several antimicrobial peptides such as defensins, cathelicidin, psoriasin, and RNase 7. Apart from its immunomodulatory activities, it is also associated with protection of Borrelia spirochetes from antibody-mediated killing through its binding to OspC. In vivo, tests on different immune disease animal models show promising therapeutic results, e.g., in inhibiting HIV infection, experimental autoimmune encephalomyelitis, transplantation rejection, and asthma. The chain is Salivary protein 15 Iper-3 from Ixodes persulcatus (Taiga tick).